The following is a 502-amino-acid chain: Protein O-glucosyltransferase 2 (502 aa).

The N-terminal stretch at 1–19 (MFGTLLLYCFFLATVPALA) is a signal peptide. A Filamin repeat occupies 24 to 130 (ERQLSPEKSE…VAKSPYILKG (107 aa)). Asn302 and Asn414 each carry an N-linked (GlcNAc...) asparagine glycan. The Prevents secretion from ER signature appears at 499–502 (KDEL).

Belongs to the KDELC family. N-glycosylated.

It localises to the endoplasmic reticulum lumen. It carries out the reaction L-seryl-[EGF-like domain protein] + UDP-alpha-D-glucose = 3-O-(beta-D-glucosyl)-L-seryl-[EGF-like domain protein] + UDP + H(+). The enzyme catalyses L-seryl-[EGF-like domain protein] + UDP-alpha-D-xylose = 3-O-(beta-D-xylosyl)-L-seryl-[EGF-like domain protein] + UDP + H(+). Its pathway is protein modification; protein glycosylation. Functionally, protein glucosyltransferase that catalyzes the transfer of glucose from UDP-glucose to a serine residue within the consensus sequence peptide C-X-N-T-X-G-S-F-X-C. Can also catalyze the transfer of xylose from UDP-xylose but less efficiently. Specifically targets extracellular EGF repeats of proteins such as NOTCH1, NOTCH3, FBN1, FBN2 and LTBP1. May regulate the transport of NOTCH1 and NOTCH3 to the plasma membrane and thereby the Notch signaling pathway. In Homo sapiens (Human), this protein is Protein O-glucosyltransferase 2.